Here is a 162-residue protein sequence, read N- to C-terminus: Small ribosomal subunit protein uS7m (162 aa).

It belongs to the universal ribosomal protein uS7 family. Part of the small ribosomal subunit.

The protein localises to the mitochondrion. Functionally, one of the primary rRNA binding proteins, it binds directly to 16S-like rRNA where it nucleates assembly of the head domain of the small subunit. The polypeptide is Small ribosomal subunit protein uS7m (mrps7) (Dictyostelium citrinum (Slime mold)).